The following is a 394-amino-acid chain: Phosphoglycerate kinase (394 aa).

Substrate is bound by residues 21 to 23, Arg36, 60 to 63, Arg114, and Arg147; these read DLN and HLGN. Residues Lys198, Glu315, and 341–344 contribute to the ATP site; that span reads GGET.

This sequence belongs to the phosphoglycerate kinase family. Monomer.

It is found in the cytoplasm. The catalysed reaction is (2R)-3-phosphoglycerate + ATP = (2R)-3-phospho-glyceroyl phosphate + ADP. The protein operates within carbohydrate degradation; glycolysis; pyruvate from D-glyceraldehyde 3-phosphate: step 2/5. The polypeptide is Phosphoglycerate kinase (Wigglesworthia glossinidia brevipalpis).